Here is a 368-residue protein sequence, read N- to C-terminus: Type 2 DNA topoisomerase 6 subunit A (368 aa).

Residues P9–A148 enclose the Topo IIA-type catalytic domain. Y103 acts as the O-(5'-phospho-DNA)-tyrosine intermediate in catalysis. Mg(2+) contacts are provided by E201 and D253.

It belongs to the TOP6A family. As to quaternary structure, homodimer. Heterotetramer of two Top6A and two Top6B chains. Requires Mg(2+) as cofactor.

The catalysed reaction is ATP-dependent breakage, passage and rejoining of double-stranded DNA.. In terms of biological role, relaxes both positive and negative superturns and exhibits a strong decatenase activity. The protein is Type 2 DNA topoisomerase 6 subunit A of Haloarcula marismortui (strain ATCC 43049 / DSM 3752 / JCM 8966 / VKM B-1809) (Halobacterium marismortui).